A 553-amino-acid chain; its full sequence is Serine protease 53 (553 aa).

The signal sequence occupies residues 1-23 (MKWCWGPVLLIAGATVLMEGLQA). Peptidase S1 domains follow at residues 24-273 (AQRA…ARVQ) and 294-526 (VACG…SLDW). A disordered region spans residues 27-46 (ACGQRGPGPPKPQEGNTVPG). The cysteines at positions 62 and 78 are disulfide-linked. Catalysis depends on charge relay system residues H77 and D128. Disulfide bonds link C158–C230, C187–C209, C220–C249, and C326–C342. Active-site charge relay system residues include S224, H341, and D382. 2 disulfides stabilise this stretch: C444-C464 and C474-C502. S478 (charge relay system) is an active-site residue.

It belongs to the peptidase S1 family. Predominantly detected in testis, liver, heart and ovary, as well as in several tumor cell lines.

It localises to the secreted. Its function is as follows. In vitro can degrade the fibrinogen alpha chain of as well as pro-urokinase-type plasminogen activator. The chain is Serine protease 53 (PRSS53) from Homo sapiens (Human).